We begin with the raw amino-acid sequence, 430 residues long: Keratin, type I cytoskeletal 18 (430 aa).

Ser-2 is subject to N-acetylserine. The interval 2-79 (SFTTRSTFST…GLAGMGGIQN (78 aa)) is head. Phosphoserine occurs at positions 7, 10, 15, and 18. Residues Ser-30 and Ser-31 each carry the phosphoserine; alternate modification. Ser-30 and Ser-31 each carry an O-linked (GlcNAc) serine; alternate glycan. Ser-34 is modified (phosphoserine; by CDK1). Tyr-36 carries the phosphotyrosine modification. Ser-42 carries the post-translational modification Phosphoserine. Omega-N-methylarginine is present on Arg-45. Position 49 is a phosphoserine; alternate (Ser-49). O-linked (GlcNAc) serine; alternate glycosylation occurs at Ser-49. Ser-51 is modified (phosphoserine; by MAPKAPK2 and MAPKAPK3). Thr-52 is subject to Phosphothreonine. A Phosphoserine; by CAMK, PKC/PRKCE and AURKA modification is found at Ser-53. Residue Arg-55 is modified to Omega-N-methylarginine. Ser-60 is modified (phosphoserine). Thr-65 bears the Phosphothreonine mark. Positions 70 to 373 (GLAGMGGIQN…EALLNIKVKL (304 aa)) are necessary for interaction with PNN. Residues 77-128 (IQNEKETMQSLNDRLASYLDRVRSLETENRRLESKIREHLEKKGPQVRDWSH) are interaction with TRADD. Residues 80-115 (EKETMQSLNDRLASYLDRVRSLETENRRLESKIREH) form a coil 1A region. An IF rod domain is found at 80 to 391 (EKETMQSLND…RLLEDGEDFN (312 aa)). Lys-81 is covalently cross-linked (Glycyl lysine isopeptide (Lys-Gly) (interchain with G-Cter in SUMO2)). A phosphoserine mark is found at Ser-93 and Ser-100. The segment at 116 to 132 (LEKKGPQVRDWSHYFKI) is linker 1. Residue Lys-131 is modified to N6-acetyllysine. Positions 133 to 224 (IEDLRAQIFA…KNHEEEVKGL (92 aa)) are coil 1B. Ser-177 bears the Phosphoserine mark. A linker 12 region spans residues 225-248 (QAQIASSGLTVEVDAPKSQDLAKI). An interaction with DNAJB6 region spans residues 243-391 (QDLAKIMADI…RLLEDGEDFN (149 aa)). Lys-247 participates in a covalent cross-link: Glycyl lysine isopeptide (Lys-Gly) (interchain with G-Cter in SUMO2). Residues 249 to 387 (MADIRAQYDE…ATYRRLLEDG (139 aa)) are coil 2. The residue at position 302 (Thr-302) is a Phosphothreonine. Phosphoserine occurs at positions 305, 319, and 323. Residues Lys-370 and Lys-372 each participate in a glycyl lysine isopeptide (Lys-Gly) (interchain with G-Cter in SUMO2) cross-link. Positions 388–430 (EDFNLGDALDSSNSMQTIQKTTTRRIVDGKVVSETNDTKVLRH) are tail. A phosphoserine mark is found at Ser-398, Ser-399, and Ser-401. At Thr-404 the chain carries Phosphothreonine. Residue Lys-417 forms a Glycyl lysine isopeptide (Lys-Gly) (interchain with G-Cter in SUMO2) linkage. N6-acetyllysine; alternate is present on Lys-426. Lys-426 is covalently cross-linked (Glycyl lysine isopeptide (Lys-Gly) (interchain with G-Cter in SUMO1); alternate). A Glycyl lysine isopeptide (Lys-Gly) (interchain with G-Cter in SUMO2); alternate cross-link involves residue Lys-426.

Belongs to the intermediate filament family. Heterotetramer of two type I and two type II keratins. KRT18 associates with KRT8. Interacts with PLEC isoform 1C, when in a heterodimer with KRT8. Interacts with the thrombin-antithrombin complex. Interacts with PNN and mutated CFTR. Interacts with YWHAE, YWHAH and YWHAZ only when phosphorylated. Interacts with DNAJB6, TCHP and TRADD. Interacts with FAM83H. Interacts with EPPK1. Interacts with PKP1 and PKP2. In terms of assembly, (Microbial infection) Interacts with hepatitis C virus/HCV core protein. Phosphorylation at Ser-34 increases during mitosis. Hyperphosphorylated at Ser-53 in diseased cirrhosis liver. Phosphorylation increases by IL-6. In terms of processing, proteolytically cleaved by caspases during epithelial cell apoptosis. Cleavage occurs at Asp-238 by either caspase-3, caspase-6 or caspase-7. Post-translationally, O-GlcNAcylation increases solubility, and decreases stability by inducing proteasomal degradation. As to expression, expressed in colon, placenta, liver and very weakly in exocervix. Increased expression observed in lymph nodes of breast carcinoma.

It localises to the nucleus matrix. The protein localises to the cytoplasm. The protein resides in the perinuclear region. Its subcellular location is the nucleus. It is found in the nucleolus. In terms of biological role, involved in the uptake of thrombin-antithrombin complexes by hepatic cells. When phosphorylated, plays a role in filament reorganization. Involved in the delivery of mutated CFTR to the plasma membrane. Together with KRT8, is involved in interleukin-6 (IL-6)-mediated barrier protection. This chain is Keratin, type I cytoskeletal 18 (KRT18), found in Homo sapiens (Human).